Consider the following 236-residue polypeptide: Small ribosomal subunit protein uS2c (236 aa).

This sequence belongs to the universal ribosomal protein uS2 family.

It is found in the plastid. The protein localises to the chloroplast. This is Small ribosomal subunit protein uS2c (rps2) from Piper cenocladum (Ant piper).